The following is a 297-amino-acid chain: Trimeric intracellular cation channel type A (297 aa).

The Lumenal segment spans residues 1–18; the sequence is MDLISSLSLGELALSFSR. The chain crosses the membrane as a helical span at residues 19–39; it reads VPLFPVFDLSYFIVSIIYLKY. Over 40–51 the chain is Cytoplasmic; sequence EPGSVELSRRHP. The chain crosses the membrane as a helical span at residues 52–72; that stretch reads VASWLCAMLHCFGSYILADLL. Topologically, residues 73-85 are lumenal; it reads LGEPIIDYFSNSS. G74 serves as a coordination point for Ca(2+). The helical transmembrane segment at 86–106 threads the bilayer; the sequence is SILLASGVWYLIFFCPLDLFY. Residues 107–143 are Cytoplasmic-facing; the sequence is KCVCFLPVKLIFVAMKEVVRVRKIAVGIHHAHHYHHG. A 1,2-diacyl-sn-glycero-3-phospho-(1D-myo-inositol-4,5-bisphosphate) is bound by residues K122 and R126. The helical transmembrane segment at 144 to 164 threads the bilayer; sequence WFIMIATGWVKGSGVALLSNL. The Lumenal portion of the chain corresponds to 165-177; sequence EQLLRGVWKPETN. A helical membrane pass occupies residues 178 to 198; it reads EILHMSFPTKASLYGAILFTL. The Cytoplasmic portion of the chain corresponds to 199–208; that stretch reads QQTRWLPVSK. A helical transmembrane segment spans residues 209 to 229; the sequence is ASLIFVFTMFMVSCKVFLTAT. Topologically, residues 230 to 233 are lumenal; that stretch reads HSHS. Residues 234–254 form a helical membrane-spanning segment; sequence SPFDVLEGYICPVLFGATWGG. Residues 255 to 297 are Cytoplasmic-facing; sequence DHHHDNHGAPHGMGLGTQHSGLPAKAKEELSEGFRKKKTKKAD. The disordered stretch occupies residues 259–297; that stretch reads DNHGAPHGMGLGTQHSGLPAKAKEELSEGFRKKKTKKAD. Positions 279-288 are enriched in basic and acidic residues; that stretch reads KAKEELSEGF.

Belongs to the TMEM38 family. In terms of assembly, homotrimer; conformation seems to be controled by binding to diacylglycerol (DAG).

The protein localises to the sarcoplasmic reticulum membrane. It is found in the nucleus membrane. The catalysed reaction is K(+)(in) = K(+)(out). With respect to regulation, channel activity is activated by a change of voltage within the sarcoplasmic reticulum lumen and blocked by luminal high Ca(2+) levels. Its function is as follows. Intracellular monovalent cation channel required for maintenance of rapid intracellular calcium release. Acts as a potassium counter-ion channel that functions in synchronization with calcium release from intracellular stores. Opened by a change of voltage within the sarcoplasmic reticulum lumen. In Rattus norvegicus (Rat), this protein is Trimeric intracellular cation channel type A.